Consider the following 150-residue polypeptide: Large ribosomal subunit protein bL9 (150 aa).

It belongs to the bacterial ribosomal protein bL9 family.

In terms of biological role, binds to the 23S rRNA. The sequence is that of Large ribosomal subunit protein bL9 from Corynebacterium diphtheriae (strain ATCC 700971 / NCTC 13129 / Biotype gravis).